The following is a 1140-amino-acid chain: Centrosomal protein of 135 kDa (1140 aa).

The homodimerization stretch occupies residues 11–64; sequence NIRKRLDQLGYRQTLTVECLPLVEKLFSDLVHTTESLRQSKLSAVKAEKESANF. Coiled-coil stretches lie at residues 75–151 and 199–416; these read NARL…KNLH and LQVA…FAVT. Phosphoserine occurs at positions 383 and 439. 3 coiled-coil regions span residues 447-644, 668-1036, and 1079-1113; these read LKGI…LENK, SLRI…LESL, and NTMLRAKVAQLQTDYDALKRQISTERYERERAIQE. Ser688 is subject to Phosphoserine. Residues 1114 to 1140 form a disordered region; that stretch reads MRRHGLATPPLSSTLRSPSHSPEHRNV. Phosphothreonine is present on Thr1121. A compositionally biased stretch (low complexity) spans 1121-1133; the sequence is TPPLSSTLRSPSH. Ser1130 is modified (phosphoserine).

Belongs to the CEP135/TSGA10 family. As to quaternary structure, homodimer. Interacts with DCTN2. Interacts with CEP250.

Its subcellular location is the cytoplasm. It is found in the cytoskeleton. The protein localises to the microtubule organizing center. It localises to the centrosome. The protein resides in the centriole. In terms of biological role, centrosomal microtubule-binding protein involved in centriole biogenesis. Acts as a scaffolding protein during early centriole biogenesis. Required for the targeting of centriole satellite proteins to centrosomes such as of PCM1, SSX2IP and CEP290 and recruitment of WRAP73 to centrioles. Also required for centriole-centriole cohesion during interphase by acting as a platform protein for CEP250 at the centriole. Required for the recruitment of CEP295 to the proximal end of new-born centrioles at the centriolar microtubule wall during early S phase in a PLK4-dependent manner. The protein is Centrosomal protein of 135 kDa of Homo sapiens (Human).